The primary structure comprises 196 residues: O-methyltransferase dpmpI (196 aa).

S-adenosyl-L-methionine contacts are provided by residues 127–128 (GG), D152, and 174–175 (SF). The segment at 166–196 (NGIEAVPHSFEDPQPIKSKSPRLDNLARERL) is disordered. Basic and acidic residues predominate over residues 186–196 (PRLDNLARERL).

Belongs to the class I-like SAM-binding methyltransferase superfamily. Cation-independent O-methyltransferase family.

It participates in secondary metabolite biosynthesis; terpenoid biosynthesis. In terms of biological role, O-methyltransferase; part of the gene cluster that mediates the biosynthesis of diterpenoid pyrones. The first step of the pathway is the synthesis of the alpha-pyrone moiety by the polyketide synthase dpmpA via condensation of one acetyl-CoA starter unit with 3 malonyl-CoA units and 2 methylations. The alpha-pyrone is then combined with geranylgeranyl pyrophosphate (GGPP) formed by the GGPP synthase dpmpD through the action of the prenyltransferase dpmpC to yield a linear alpha-pyrone diterpenoid. Subsequent steps in the diterpenoid pyrone biosynthetic pathway involve the decalin core formation, which is initiated by the epoxidation of the C10-C11 olefin by the FAD-dependent oxidoreductase dpmpE, and is followed by a cyclization cascade catalyzed by the terpene cyclase dpmpB. The short chain dehydrogenase/reductase dpmpG then oxidizes the 8S hydroxy group to a ketone and the short chain dehydrogenase/reductase dpmpH reduces the ketone to the 8R hydroxy group to yield higginsianin B. Higginsianin B is further methylated by the methyltransferase dpmpI to produce the intermediate named FDDP B. The cytochrome P450 monooxygenase dpmpJ then oxidizes the C-26 methyl to primary alcohol, producing the final diterpenoid pyrone with a C-26 primary alcohol on the gamma-pyrone moiety named FDDP C. The protein is O-methyltransferase dpmpI of Macrophomina phaseolina (strain MS6) (Charcoal rot fungus).